The chain runs to 199 residues: Recombination protein RecR (199 aa).

Residues 56 to 71 (CSICFNWSAEDPCEIC) form a C4-type zinc finger. The region spanning 79-174 (SLWCVVADVK…TLRMTRLAFG (96 aa)) is the Toprim domain.

The protein belongs to the RecR family.

Its function is as follows. May play a role in DNA repair. It seems to be involved in an RecBC-independent recombinational process of DNA repair. It may act with RecF and RecO. This is Recombination protein RecR from Synechococcus sp. (strain JA-2-3B'a(2-13)) (Cyanobacteria bacterium Yellowstone B-Prime).